The chain runs to 363 residues: UDP-N-acetylglucosamine--N-acetylmuramyl-(pentapeptide) pyrophosphoryl-undecaprenol N-acetylglucosamine transferase (363 aa).

UDP-N-acetyl-alpha-D-glucosamine contacts are provided by residues 14 to 16 (TGG), Asn122, Arg163, Ser190, and Gln285.

It belongs to the glycosyltransferase 28 family. MurG subfamily.

It is found in the cell inner membrane. It carries out the reaction di-trans,octa-cis-undecaprenyl diphospho-N-acetyl-alpha-D-muramoyl-L-alanyl-D-glutamyl-meso-2,6-diaminopimeloyl-D-alanyl-D-alanine + UDP-N-acetyl-alpha-D-glucosamine = di-trans,octa-cis-undecaprenyl diphospho-[N-acetyl-alpha-D-glucosaminyl-(1-&gt;4)]-N-acetyl-alpha-D-muramoyl-L-alanyl-D-glutamyl-meso-2,6-diaminopimeloyl-D-alanyl-D-alanine + UDP + H(+). It functions in the pathway cell wall biogenesis; peptidoglycan biosynthesis. Functionally, cell wall formation. Catalyzes the transfer of a GlcNAc subunit on undecaprenyl-pyrophosphoryl-MurNAc-pentapeptide (lipid intermediate I) to form undecaprenyl-pyrophosphoryl-MurNAc-(pentapeptide)GlcNAc (lipid intermediate II). The protein is UDP-N-acetylglucosamine--N-acetylmuramyl-(pentapeptide) pyrophosphoryl-undecaprenol N-acetylglucosamine transferase of Prochlorococcus marinus (strain MIT 9312).